The following is a 425-amino-acid chain: UPF0597 protein Moth_1414 (425 aa).

Belongs to the UPF0597 family.

In Moorella thermoacetica (strain ATCC 39073 / JCM 9320), this protein is UPF0597 protein Moth_1414.